Reading from the N-terminus, the 573-residue chain is Delta 8-(E)-sphingolipid desaturase (573 aa).

Positions 2–77 (SRVLSRRDIA…FKIWKIGRID (76 aa)) constitute a Cytochrome b5 heme-binding domain. Heme is bound by residues histidine 37 and histidine 60. The chain crosses the membrane as a helical span at residues 228 to 248 (LFGISFYLLSLKWFAISAICL). The Histidine box-1 motif lies at 260–264 (HDAGH). Residues 273 to 293 (VDNIIGMTVASWIGGLSLGWW) traverse the membrane as a helical segment. Positions 297–301 (HDVHH) match the Histidine box-2 motif. Transmembrane regions (helical) follow at residues 353–372 (YLYYPILCFGRFNLYRLSWM), 393–413 (LAELSFFNYWFFYLIIYKQMP), and 422–442 (VMISHIATMIVHVQITLSHFA). The Histidine box-3 signature appears at 481–485 (QVIHH).

Belongs to the fatty acid desaturase type 1 family.

It is found in the membrane. The enzyme catalyses an N-acylsphing-4-enine + 2 Fe(II)-[cytochrome b5] + O2 + 2 H(+) = a (4E,8E)-4-sphinga-4,8-dienine ceramide + 2 Fe(III)-[cytochrome b5] + 2 H2O. Its pathway is lipid metabolism; sphingolipid metabolism. Delta(8)-fatty-acid desaturase which introduces a double bond at the 8-position in the long-chain base (LCB) of ceramides. Required for the formation of the di-unsaturated sphingoid base (E,E)-sphinga-4,8-dienine during glucosylceramide (GluCer) biosynthesis. The polypeptide is Delta 8-(E)-sphingolipid desaturase (Kluyveromyces lactis (Yeast)).